The following is a 350-amino-acid chain: GTPase Obg (350 aa).

The 159-residue stretch at 1-159 (MKLVDEAEIL…RLLKLELRLL (159 aa)) folds into the Obg domain. Positions 127–146 (NMHFKSSVNRAPRQSTTGEE) are disordered. Residues 130-143 (FKSSVNRAPRQSTT) are compositionally biased toward polar residues. An OBG-type G domain is found at 160–337 (ADVGLLGFPN…IMKDVMAFFD (178 aa)). GTP is bound by residues 166-173 (GFPNAGKS), 191-195 (FTTLY), 213-216 (DVPG), 287-290 (NKAD), and 318-320 (SAL). Residues S173 and T193 each coordinate Mg(2+).

The protein belongs to the TRAFAC class OBG-HflX-like GTPase superfamily. OBG GTPase family. Monomer. It depends on Mg(2+) as a cofactor.

It localises to the cytoplasm. Its function is as follows. An essential GTPase which binds GTP, GDP and possibly (p)ppGpp with moderate affinity, with high nucleotide exchange rates and a fairly low GTP hydrolysis rate. Plays a role in control of the cell cycle, stress response, ribosome biogenesis and in those bacteria that undergo differentiation, in morphogenesis control. This is GTPase Obg from Xanthomonas oryzae pv. oryzae (strain MAFF 311018).